We begin with the raw amino-acid sequence, 130 residues long: Small ribosomal subunit protein uS11 (130 aa).

It belongs to the universal ribosomal protein uS11 family. Part of the 30S ribosomal subunit. Interacts with proteins S7 and S18. Binds to IF-3.

Functionally, located on the platform of the 30S subunit, it bridges several disparate RNA helices of the 16S rRNA. Forms part of the Shine-Dalgarno cleft in the 70S ribosome. The sequence is that of Small ribosomal subunit protein uS11 from Shewanella baltica (strain OS223).